Consider the following 246-residue polypeptide: Bis(5'-nucleosyl)-tetraphosphatase PrpE [asymmetrical] (246 aa).

It belongs to the PrpE family. Requires Ni(2+) as cofactor.

It carries out the reaction P(1),P(4)-bis(5'-guanosyl) tetraphosphate + H2O = GMP + GTP + 2 H(+). Its function is as follows. Asymmetrically hydrolyzes Ap4p to yield AMP and ATP. The sequence is that of Bis(5'-nucleosyl)-tetraphosphatase PrpE [asymmetrical] from Bacillus cereus (strain AH820).